The sequence spans 314 residues: tRNA dimethylallyltransferase (314 aa).

Residue 11-18 (GPTAVGKT) participates in ATP binding. A substrate-binding site is contributed by 13–18 (TAVGKT). Residues 36–39 (DSMQ) form an interaction with substrate tRNA region.

This sequence belongs to the IPP transferase family. Monomer. Mg(2+) serves as cofactor.

The catalysed reaction is adenosine(37) in tRNA + dimethylallyl diphosphate = N(6)-dimethylallyladenosine(37) in tRNA + diphosphate. In terms of biological role, catalyzes the transfer of a dimethylallyl group onto the adenine at position 37 in tRNAs that read codons beginning with uridine, leading to the formation of N6-(dimethylallyl)adenosine (i(6)A). This is tRNA dimethylallyltransferase from Bacillus anthracis.